The following is a 358-amino-acid chain: GTPase Obg (358 aa).

One can recognise an Obg domain in the interval 1-158; sequence MFVDNVDIYV…RHVRLELKLI (158 aa). The 197-residue stretch at 159 to 355 folds into the OBG-type G domain; the sequence is ADVGLVGFPN…LKYLLHESVR (197 aa). Residues 165–172, 190–194, 212–215, 280–283, and 336–338 contribute to the GTP site; these read GFPNVGKS, FTTLI, DIPG, SKVD, and SSA. 2 residues coordinate Mg(2+): Ser-172 and Thr-192.

This sequence belongs to the TRAFAC class OBG-HflX-like GTPase superfamily. OBG GTPase family. Monomer. Mg(2+) serves as cofactor.

It localises to the cytoplasm. Its function is as follows. An essential GTPase which binds GTP, GDP and possibly (p)ppGpp with moderate affinity, with high nucleotide exchange rates and a fairly low GTP hydrolysis rate. Plays a role in control of the cell cycle, stress response, ribosome biogenesis and in those bacteria that undergo differentiation, in morphogenesis control. The sequence is that of GTPase Obg from Wolinella succinogenes (strain ATCC 29543 / DSM 1740 / CCUG 13145 / JCM 31913 / LMG 7466 / NCTC 11488 / FDC 602W) (Vibrio succinogenes).